The following is a 215-amino-acid chain: Nuclear autoantigen Sp-100 (215 aa).

Positions 1–31 (EGDRGASKNWKLSIRCGGYTLKVLTENKFLP) constitute an SAND domain. 2 DNA-binding regions (HMG box) span residues 32 to 108 (EPPS…KTYI) and 124 to 192 (PKRP…AACR). A Nuclear localization signal motif is present at residues 72 to 89 (KKRSEMWKTIFAKEKGKF). 2 disordered regions span residues 104-124 (MKTYIPPKGEKKKKFKDPNAP) and 193-215 (AKGKPNSATKRVVKAEKSKKKKE).

In terms of assembly, homodimer. Interacts with members of the HP1 family of nonhistone chromosomal protein, such as CBX5 and CBX3 via the PxVxL motif. Interacts with ETS1; the interaction is direct and modulates ETS1 transcriptional activity. Interacts with the MRN complex which is composed of two heterodimers RAD50/MRE11 associated with a single NBN; recruits the complex to PML-related bodies. Interacts with HIPK2; positively regulates TP53-dependent transcription. Interacts with CASP8AP2; may negatively regulate CASP8AP2 export from the nucleus to the cytoplasm. Post-translationally, phosphorylated. In terms of processing, sumoylated. Sumoylated with SUMO1. Sumoylation depends on a functional nuclear localization signal but is not necessary for nuclear import or nuclear body targeting. Sumoylation may stabilize the interaction with CBX5.

It is found in the nucleus. The protein resides in the PML body. It localises to the nuclear body. Its subcellular location is the cytoplasm. Its function is as follows. Together with PML, this tumor suppressor is a major constituent of the PML bodies, a subnuclear organelle involved in a large number of physiological processes including cell growth, differentiation and apoptosis. Functions as a transcriptional coactivator of ETS1 and ETS2. Under certain conditions, it may also act as a corepressor of ETS1 preventing its binding to DNA. Through the regulation of ETS1 it may play a role in angiogenesis, controlling endothelial cell motility and invasion. Through interaction with the MRN complex it may be involved in the regulation of telomeres lengthening. May also regulate TP53-mediated transcription and through CASP8AP2, regulate FAS-mediated apoptosis. May also play a role in infection by viruses through mechanisms that may involve chromatin and/or transcriptional regulation. The protein is Nuclear autoantigen Sp-100 (SP100) of Pan troglodytes (Chimpanzee).